An 879-amino-acid chain; its full sequence is MANVQEDKDFHGRWPDRTLQPCLKDYKALLESYQNWSAARFVTADIDELVHHRATFFDQLISQLWQQFQLEDEPASILAVGGYGRETLHPGSDIDLLILVGPENAEAEAKLSEKLGQFVTFLWDLHLDIGHSVRTIEDCFAQSENDITIATNLIESRYLSGAESLYNEFHQQLLNDFPWSSRDFYQAKLDEQKQRHQQYHSTSYNLEPNIKSSPGGLRDIQTVGWIAKRHFRTHSDENLVEYGYMTADEFVELRDCMNWLWRIRFALHLEAGKREDRLLFDFQPGVAVRLGYGNDGKASVETMMKDYFKVVLRVSELNQMLLQFFHQAILGTQDLQHAEHISDDFAVANKLLTARHDNVFDNHCNIIRAFVCIAEHPQIQGIHSNTIRLLRNARAQLSEPLSHDPECRDLFNQLIQHPRGCGLSFALMHHHSVLASYLSQWQQIVGQMQFDLFHAYTVDEHTFRLVRNLYRFSDEDYQDQFPLCEKLVAQMDRRYCLYLAGIFHDIAKGRGGDHSELGEMDARNFCHQHGYSEEDAELVAWLVRHHLTMSVTAQKRDIHDPEVIQDFANQVSTPERLDYLYCLTVADIRATNQSLWNNWKATLLEELYNATSYLLQQDSNKPTLDIRQKINENKASAMALLLSAGFEKAEILALWGRFTADYFFRHTAEQISWHSQHILNLPSEQLPLILIGDENNYGTTELFIYHHEEGHLFASVAGVLDSQQLNILDAQILATRDGFVMDTFVVLQRDGKPLTEPHRIEEVKQQLLDVLHKRIPVPSTKRPLSRRMKNFSVATEVTFIPSKHHGRTTFELVTLDRPGLIAKLAAILQQQNVILLAAKITTIGEQAEDLFIVTTEQQTALSDKQKKTLKAKIIKDLEF.

Positions 1–340 are uridylyltransferase; sequence MANVQEDKDF…GTQDLQHAEH (340 aa). Residues 341-700 are uridylyl-removing; sequence ISDDFAVANK…IGDENNYGTT (360 aa). An HD domain is found at 458–580; sequence VDEHTFRLVR…VSTPERLDYL (123 aa). ACT domains lie at 701-782 and 809-879; these read ELFI…STKR and TFEL…DLEF.

Belongs to the GlnD family. Mg(2+) is required as a cofactor.

The enzyme catalyses [protein-PII]-L-tyrosine + UTP = [protein-PII]-uridylyl-L-tyrosine + diphosphate. It catalyses the reaction [protein-PII]-uridylyl-L-tyrosine + H2O = [protein-PII]-L-tyrosine + UMP + H(+). Uridylyltransferase (UTase) activity is inhibited by glutamine, while glutamine activates uridylyl-removing (UR) activity. Modifies, by uridylylation and deuridylylation, the PII regulatory proteins (GlnB and homologs), in response to the nitrogen status of the cell that GlnD senses through the glutamine level. Under low glutamine levels, catalyzes the conversion of the PII proteins and UTP to PII-UMP and PPi, while under higher glutamine levels, GlnD hydrolyzes PII-UMP to PII and UMP (deuridylylation). Thus, controls uridylylation state and activity of the PII proteins, and plays an important role in the regulation of nitrogen assimilation and metabolism. This is Bifunctional uridylyltransferase/uridylyl-removing enzyme from Idiomarina loihiensis (strain ATCC BAA-735 / DSM 15497 / L2-TR).